Here is a 943-residue protein sequence, read N- to C-terminus: Neutral alpha-glucosidase AB (943 aa).

An N-terminal signal peptide occupies residues 1 to 23 (MRKLVILIILSIVCSLFIGSIES). A disordered region spans residues 186 to 231 (FEPISDKPQPLPPKEKKSEEENKEANQEEDNNNNNNDNNEEQQVST). The span at 198–211 (PKEKKSEEENKEAN) shows a compositional bias: basic and acidic residues. The active-site Nucleophile is the Asp-540. Glu-543 is an active-site residue. The Proton donor role is filled by Asp-617. Asn-878, Asn-887, and Asn-907 each carry an N-linked (GlcNAc...) asparagine glycan.

This sequence belongs to the glycosyl hydrolase 31 family.

The protein localises to the endoplasmic reticulum. The protein resides in the golgi apparatus. The enzyme catalyses N(4)-(alpha-D-Glc-(1-&gt;3)-alpha-D-Man-(1-&gt;2)-alpha-D-Man-(1-&gt;2)-alpha-D-Man-(1-&gt;3)-[alpha-D-Man-(1-&gt;2)-alpha-D-Man-(1-&gt;3)-[alpha-D-Man-(1-&gt;2)-alpha-D-Man-(1-&gt;6)]-alpha-D-Man-(1-&gt;6)]-beta-D-Man-(1-&gt;4)-beta-D-GlcNAc-(1-&gt;4)-beta-D-GlcNAc)-L-asparaginyl-[protein] + H2O = N(4)-(alpha-D-Man-(1-&gt;2)-alpha-D-Man-(1-&gt;2)-alpha-D-Man-(1-&gt;3)-[alpha-D-Man-(1-&gt;2)-alpha-D-Man-(1-&gt;3)-[alpha-D-Man-(1-&gt;2)-alpha-D-Man-(1-&gt;6)]-alpha-D-Man-(1-&gt;6)]-beta-D-Man-(1-&gt;4)-beta-D-GlcNAc-(1-&gt;4)-beta-D-GlcNAc)-L-asparaginyl-[protein] (N-glucan mannose isomer 9A1,2,3B1,2,3) + beta-D-glucose. It carries out the reaction N(4)-(alpha-D-Glc-(1-&gt;3)-alpha-D-Glc-(1-&gt;3)-alpha-D-Man-(1-&gt;2)-alpha-D-Man-(1-&gt;2)-alpha-D-Man-(1-&gt;3)-[alpha-D-Man-(1-&gt;2)-alpha-D-Man-(1-&gt;3)-[alpha-D-Man-(1-&gt;2)-alpha-D-Man-(1-&gt;6)]-alpha-D-Man-(1-&gt;6)]-beta-D-Man-(1-&gt;4)-beta-D-GlcNAc-(1-&gt;4)-beta-D-GlcNAc)-L-asparaginyl-[protein] + H2O = N(4)-(alpha-D-Glc-(1-&gt;3)-alpha-D-Man-(1-&gt;2)-alpha-D-Man-(1-&gt;2)-alpha-D-Man-(1-&gt;3)-[alpha-D-Man-(1-&gt;2)-alpha-D-Man-(1-&gt;3)-[alpha-D-Man-(1-&gt;2)-alpha-D-Man-(1-&gt;6)]-alpha-D-Man-(1-&gt;6)]-beta-D-Man-(1-&gt;4)-beta-D-GlcNAc-(1-&gt;4)-beta-D-GlcNAc)-L-asparaginyl-[protein] + beta-D-glucose. Its pathway is glycan metabolism; N-glycan metabolism. Its function is as follows. Cleaves sequentially the 2 innermost alpha-1,3-linked glucose residues from N-linked oligosaccharides on newly synthesized glycoproteins. The protein is Neutral alpha-glucosidase AB (modA) of Dictyostelium discoideum (Social amoeba).